We begin with the raw amino-acid sequence, 73 residues long: Putative antitoxin VapB21 (73 aa).

The protein belongs to the UPF0330 family.

Its function is as follows. Possibly the antitoxin component of a type II toxin-antitoxin (TA) system. Its cognate toxin is VapC21 (Potential). The polypeptide is Putative antitoxin VapB21 (vapB21) (Sulfurisphaera tokodaii (strain DSM 16993 / JCM 10545 / NBRC 100140 / 7) (Sulfolobus tokodaii)).